Reading from the N-terminus, the 433-residue chain is MRSVSYVQRVALEFSGSLFPHAICLGDVDNDTLNELVVGDTSGKVSVYKNDDSRPWLTCSCQGMLTCVGVGDVCNKGKNLLVAVSAEGWFHLFDLTPAKVLDASGHHETLIGEEQRPVFKQHIPANTKVMLISDIDGDGCRELVVGYTDRVVRAFRWEELGEGPEHLTGQLVSLKKWMLEGQVDSLSVTLGPLGLPELMVSQPGCAYAILLCTWKKDTGSPPASEGPMDGSRETPAARDVVLHQTSGRIHNKNVSTHLTGNIKQGHGTESSGSGLFALCTLDGTLKLMEEMEEADKLLWSVQVDHQLFALEKLDVTGNGHEEVVACAWDGQTYIIDHNRTVVRFQVDENIRAFCAGLYACKEGRNSPCLVYVTFNQKIYVYWEVQLERMESTNLVKLLETKPEYHSLLQELGVDPDDLPVTRALLHQTLYHPD.

One copy of the FG-GAP 1; atypical repeat lies at 19–48; the sequence is FPHAICLGDVDNDTLNELVVGDTSGKVSVY. The residue at position 104 (serine 104) is a Phosphoserine. An FG-GAP 2; atypical repeat occupies 126-155; sequence NTKVMLISDIDGDGCRELVVGYTDRVVRAF. Serine 220 is subject to Phosphoserine.

In terms of assembly, part of the KICSTOR complex composed of KPTN, ITFG2, KICS2 and SZT2. SZT2 probably serves as a link between the other three proteins in the KICSTOR complex and may mediate the direct interaction with the GATOR complex via GATOR1. The KICSTOR complex interacts directly with the GATOR1 complex and most probably indirectly with the GATOR2 complex in an amino acid-independent manner.

It localises to the lysosome membrane. Its function is as follows. As part of the KICSTOR complex functions in the amino acid-sensing branch of the TORC1 signaling pathway. Recruits, in an amino acid-independent manner, the GATOR1 complex to the lysosomal membranes and allows its interaction with GATOR2 and the RAG GTPases. Functions upstream of the RAG GTPases and is required to negatively regulate mTORC1 signaling in absence of amino acids. In absence of the KICSTOR complex mTORC1 is constitutively localized to the lysosome and activated. The KICSTOR complex is also probably involved in the regulation of mTORC1 by glucose. This chain is KICSTOR complex protein ITFG2, found in Pongo abelii (Sumatran orangutan).